Consider the following 211-residue polypeptide: Tudor-interacting repair regulator protein (211 aa).

Residues K10 and K151 each participate in a glycyl lysine isopeptide (Lys-Gly) (interchain with G-Cter in ubiquitin) cross-link. The segment at 118-205 (TLEQLHAVEI…TEKQKKALEK (88 aa)) is interaction with PXN.

This sequence belongs to the Nudix hydrolase family. TIRR subfamily. In terms of assembly, homodimer. Interacts with TP53BP1 (via the Tudor-like domain); interaction is abolished following DNA damage and TP53BP1 phosphorylation by ATM. Interacts (via the cytoplasmic part) with SDC4. Interacts with TGFB1I1 and PXN.

It localises to the nucleus. Its function is as follows. Key regulator of TP53BP1 required to stabilize TP53BP1 and regulate its recruitment to chromatin. In absence of DNA damage, interacts with the tandem Tudor-like domain of TP53BP1, masking the region that binds histone H4 dimethylated at 'Lys-20' (H4K20me2), thereby preventing TP53BP1 recruitment to chromatin and maintaining TP53BP1 localization to the nucleus. Following DNA damage, ATM-induced phosphorylation of TP53BP1 and subsequent recruitment of RIF1 leads to dissociate NUDT16L1/TIRR from TP53BP1, unmasking the tandem Tudor-like domain and allowing recruitment of TP53BP1 to DNA double strand breaks (DSBs). Binds U8 snoRNA. This chain is Tudor-interacting repair regulator protein, found in Homo sapiens (Human).